The primary structure comprises 817 residues: Transcription factor SPT20 homolog-like 2 (817 aa).

The span at 1–14 (MDRDLEQALDRTEN) shows a compositional bias: basic and acidic residues. Disordered regions lie at residues 1–28 (MDRD…RRRY), 249–275 (PQQE…ERKV), 369–553 (PRKK…AAGR), 598–630 (PGSG…AVQA), and 675–697 (QLQQ…LGLS). A compositionally biased stretch (polar residues) spans 423–440 (SHSSSGPASVSQLSSWKT). Low complexity-rich tracts occupy residues 469–479 (SSSGKISSGNS), 494–505 (PAAAPAVAAAAP), 513–531 (AAPA…GAAP), and 598–618 (PGSG…SSGG).

Belongs to the SPT20 family.

The chain is Transcription factor SPT20 homolog-like 2 (SUPT20HL2) from Homo sapiens (Human).